The sequence spans 342 residues: MTKSLFRQSFLFDSLDLDHPMVAQTVRTEQGVTLKLHQRGVLEVIPAQTDAATKNMVISCGIHGDETAPMELLDKWIDDIVSGFQPVAERCLFIMAHPQATVRHVRFIEQNLNRLFDDKPHTPSTELAIADNLKVLLRQFFANTDEHSRWHLDLHCAIRGSKHYSFAVSPKARHPVRSRSLMQFIEQAHIEAVMLSNAPSSTFSWYSAEHYAAQALTLELGQVARLGENLLDRLLAFDLAMRDLISRHKPEHLPRKSVMYRVSRTIVRLHDDFDFRFSDDVENFTAFMHGEVFGHDGDKPLMAKNEGEAIVFPNRKVAIGQRAALMVCKVNTRYEDDQLVYD.

His-63, Glu-66, and His-155 together coordinate Zn(2+). The active site involves Glu-219.

It belongs to the AspA/AstE family. Succinylglutamate desuccinylase subfamily. Zn(2+) serves as cofactor.

It carries out the reaction N-succinyl-L-glutamate + H2O = L-glutamate + succinate. The protein operates within amino-acid degradation; L-arginine degradation via AST pathway; L-glutamate and succinate from L-arginine: step 5/5. Its function is as follows. Transforms N(2)-succinylglutamate into succinate and glutamate. The sequence is that of Succinylglutamate desuccinylase from Vibrio cholerae serotype O1 (strain ATCC 39315 / El Tor Inaba N16961).